The primary structure comprises 673 residues: UvrABC system protein B (673 aa).

Positions 26–183 (EGLEDGLAHQ…RRLAELQYTR (158 aa)) constitute a Helicase ATP-binding domain. 39-46 (GVTGSGKT) contributes to the ATP binding site. Positions 92–115 (YYDYYQPEAYVPSSDTFIEKDASV) match the Beta-hairpin motif. The Helicase C-terminal domain maps to 431–597 (QVDDLLSEIR…GLNKKVVDIL (167 aa)). The UVR domain occupies 633–668 (QQKIHELEGQMMQHAQNLEFEEAAQIRDQLHQLREL).

Belongs to the UvrB family. In terms of assembly, forms a heterotetramer with UvrA during the search for lesions. Interacts with UvrC in an incision complex.

It localises to the cytoplasm. The UvrABC repair system catalyzes the recognition and processing of DNA lesions. A damage recognition complex composed of 2 UvrA and 2 UvrB subunits scans DNA for abnormalities. Upon binding of the UvrA(2)B(2) complex to a putative damaged site, the DNA wraps around one UvrB monomer. DNA wrap is dependent on ATP binding by UvrB and probably causes local melting of the DNA helix, facilitating insertion of UvrB beta-hairpin between the DNA strands. Then UvrB probes one DNA strand for the presence of a lesion. If a lesion is found the UvrA subunits dissociate and the UvrB-DNA preincision complex is formed. This complex is subsequently bound by UvrC and the second UvrB is released. If no lesion is found, the DNA wraps around the other UvrB subunit that will check the other stand for damage. This is UvrABC system protein B from Salmonella arizonae (strain ATCC BAA-731 / CDC346-86 / RSK2980).